Here is a 367-residue protein sequence, read N- to C-terminus: Eukaryotic translation initiation factor 3 subunit H (367 aa).

The MPN domain occupies 14 to 166 (VQVEALVVMK…LRAFRLSPNF (153 aa)).

The protein belongs to the eIF-3 subunit H family. As to quaternary structure, component of the eukaryotic translation initiation factor 3 (eIF-3) complex.

Its subcellular location is the cytoplasm. Its function is as follows. Component of the eukaryotic translation initiation factor 3 (eIF-3) complex, which is involved in protein synthesis of a specialized repertoire of mRNAs and, together with other initiation factors, stimulates binding of mRNA and methionyl-tRNAi to the 40S ribosome. The eIF-3 complex specifically targets and initiates translation of a subset of mRNAs involved in cell proliferation. In Sclerotinia sclerotiorum (strain ATCC 18683 / 1980 / Ss-1) (White mold), this protein is Eukaryotic translation initiation factor 3 subunit H.